The sequence spans 381 residues: Sulfate adenylyltransferase (381 aa).

The protein belongs to the sulfate adenylyltransferase family.

It carries out the reaction sulfate + ATP + H(+) = adenosine 5'-phosphosulfate + diphosphate. It participates in sulfur metabolism; hydrogen sulfide biosynthesis; sulfite from sulfate: step 1/3. The protein is Sulfate adenylyltransferase of Chloroflexus aurantiacus (strain ATCC 29366 / DSM 635 / J-10-fl).